A 523-amino-acid polypeptide reads, in one-letter code: Cyclin-dependent kinase 17 (523 aa).

The residue at position 9 (S9) is a Phosphoserine. The segment at 31–55 (IEESSSKDNEPIVKNGRPPTSHSMH) is disordered. Phosphoserine occurs at positions 80, 92, and 105. A disordered region spans residues 103-123 (MGSDGESDQASGTSSDEVQSP). A compositionally biased stretch (polar residues) spans 110-123 (DQASGTSSDEVQSP). Residues S137, S146, S165, and S180 each carry the phosphoserine modification. In terms of domain architecture, Protein kinase spans 192-473 (YIKLEKLGEG…AEEAMKHVYF (282 aa)). Residues 198–206 (LGEGTYATV) and K221 each bind ATP. Residue D313 is the Proton acceptor of the active site.

The protein belongs to the protein kinase superfamily. CMGC Ser/Thr protein kinase family. CDC2/CDKX subfamily. As to quaternary structure, found in a complex containing CABLES1, CDK16 and TDRD7. Interacts with TDRD7. In terms of tissue distribution, brain specific. Within the brain it is concentrated in the neuronal layers of the hippocampus and olfactory bulb, which mostly consist of post-mitotic neurons.

The catalysed reaction is L-seryl-[protein] + ATP = O-phospho-L-seryl-[protein] + ADP + H(+). It catalyses the reaction L-threonyl-[protein] + ATP = O-phospho-L-threonyl-[protein] + ADP + H(+). May play a role in terminally differentiated neurons. Has a Ser/Thr-phosphorylating activity for histone H1. This Rattus norvegicus (Rat) protein is Cyclin-dependent kinase 17 (Cdk17).